The following is a 1052-amino-acid chain: Eukaryotic translation initiation factor 3 subunit A (1052 aa).

Positions 325-505 constitute a PCI domain; it reads IQYAASAVLL…GSLHFNNNIF (181 aa). Coiled-coil stretches lie at residues 568-712 and 769-882; these read REHV…RLRE and EKTA…SAQT. Composition is skewed to basic and acidic residues over residues 570–600 and 793–874; these read HVSNLSRRDEIEKQKEELEQSRRRRHQEQMQ and KIRL…EQEK. Disordered regions lie at residues 570-606 and 793-1052; these read HVSNLSRRDEIEKQKEELEQSRRRRHQEQMQKHHQNQ and KIRL…DDKN. 2 stretches are compositionally biased toward polar residues: residues 875–887 and 895–906; these read LSNLSAQTSQPTW and APTTAAPSSMRV. 4 stretches are compositionally biased toward basic and acidic residues: residues 942–952, 960–970, 979–1013, and 1037–1052; these read DRGDRAPRDTG, RAPRDFSGRSEPSRSGPRDFSGRSEAGRTSGERRA, and GSERRVNIPSRGDDKN.

Belongs to the eIF-3 subunit A family. In terms of assembly, component of the eukaryotic translation initiation factor 3 (eIF-3) complex.

The protein localises to the cytoplasm. Functionally, RNA-binding component of the eukaryotic translation initiation factor 3 (eIF-3) complex, which is involved in protein synthesis of a specialized repertoire of mRNAs and, together with other initiation factors, stimulates binding of mRNA and methionyl-tRNAi to the 40S ribosome. The eIF-3 complex specifically targets and initiates translation of a subset of mRNAs involved in cell proliferation. The sequence is that of Eukaryotic translation initiation factor 3 subunit A from Monosiga brevicollis (Choanoflagellate).